The following is a 360-amino-acid chain: Type II methyltransferase M.BglII (360 aa).

Residues 316-341 (TRQRKGSKPSLDSKAHPEEHHKKEIV) form a disordered region. Over residues 326-341 (LDSKAHPEEHHKKEIV) the composition is skewed to basic and acidic residues.

This sequence belongs to the N(4)/N(6)-methyltransferase family. N(4) subfamily.

It carries out the reaction a 2'-deoxycytidine in DNA + S-adenosyl-L-methionine = an N(4)-methyl-2'-deoxycytidine in DNA + S-adenosyl-L-homocysteine + H(+). In terms of biological role, a beta subtype methylase, recognizes the double-stranded sequence 5'-AGATCT-3', methylates C-5 on both strands, and protects the DNA from cleavage by the BglII endonuclease. This is Type II methyltransferase M.BglII from Bacillus subtilis.